A 435-amino-acid chain; its full sequence is 5'-deoxyadenosine deaminase (435 aa).

The Zn(2+) site is built by H64 and H66. 2 residues coordinate substrate: E93 and H185. Position 212 (H212) interacts with Zn(2+). 2 residues coordinate substrate: E215 and D300. D300 is a binding site for Zn(2+).

Belongs to the metallo-dependent hydrolases superfamily. MTA/SAH deaminase family. As to quaternary structure, homotetramer. The cofactor is Zn(2+).

The enzyme catalyses 5'-deoxyadenosine + H2O + H(+) = 5'-deoxyinosine + NH4(+). The catalysed reaction is S-adenosyl-L-homocysteine + H2O + H(+) = S-inosyl-L-homocysteine + NH4(+). It carries out the reaction S-methyl-5'-thioadenosine + H2O + H(+) = S-methyl-5'-thioinosine + NH4(+). It catalyses the reaction adenosine + H2O + H(+) = inosine + NH4(+). The protein operates within amino-acid biosynthesis; S-adenosyl-L-methionine biosynthesis. Its function is as follows. Catalyzes the deamination of three SAM-derived enzymatic products, namely 5'-deoxyadenosine, S-adenosyl-L-homocysteine, and 5'-methylthioadenosine, to produce the inosine analogs. Can also deaminate adenosine. The preferred substrate for this enzyme is 5'-deoxyadenosine, but all these substrates are efficiently deaminated. Likely functions in a S-adenosyl-L-methionine (SAM) recycling pathway from S-adenosyl-L-homocysteine (SAH) produced from SAM-dependent methylation reactions. May also be involved in the recycling of 5'-deoxyadenosine, whereupon the 5'-deoxyribose moiety of 5'-deoxyinosine is further metabolized to deoxyhexoses used for the biosynthesis of aromatic amino acids in methanogens. The polypeptide is 5'-deoxyadenosine deaminase (Methanobrevibacter smithii (strain ATCC 35061 / DSM 861 / OCM 144 / PS)).